A 142-amino-acid chain; its full sequence is Large ribosomal subunit protein uL11 (142 aa).

As to quaternary structure, part of the ribosomal stalk of the 50S ribosomal subunit. Interacts with L10 and the large rRNA to form the base of the stalk. L10 forms an elongated spine to which L12 dimers bind in a sequential fashion forming a multimeric L10(L12)X complex. Post-translationally, lys-40 is trimethylated or acetylated; other modifications may also exist.

In terms of biological role, forms part of the ribosomal stalk which helps the ribosome interact with GTP-bound translation factors. This chain is Large ribosomal subunit protein uL11, found in Rhodopseudomonas palustris (strain ATCC BAA-98 / CGA009).